Consider the following 168-residue polypeptide: Pleiotrophin (168 aa).

An N-terminal signal peptide occupies residues 1–32 (MQTPQFLQQRRKFAAAFLAFIFLLAVVDTAEA). 5 disulfide bridges follow: Cys-47/Cys-76, Cys-55/Cys-85, Cys-62/Cys-89, Cys-99/Cys-131, and Cys-109/Cys-141. Chondroitin sulfate binding regions lie at residues 92–99 (KKQFGAEC) and 123–131 (KRALHNADC). A disordered region spans residues 139 to 168 (KPCGKVTKPKPQAESKKKKKEGKKQEKMLD). The interval 147–168 (PKPQAESKKKKKEGKKQEKMLD) is chondroitin sulfate A binding.

The protein belongs to the pleiotrophin family. In terms of assembly, interacts with ALK and NEK6. Interacts with PTPRZ1 (via chondroitin sulfate groups); promotes formation of homooligomers; oligomerization impairs tyrosine phosphatase activity. Forms a complex with PTPRZ1 and CTNNB1; this complex inactivates PTPRZ1 protein tyrosine phosphatase activity through PTN interaction and stimulates tyrosine phosphorylation of CTNNB1. Interacts with ITGB3 and ITGA5. Forms a complex with PTPRZ1 and integrin alpha-V/beta-3 (ITGAV:ITGB3) that stimulates endothelial cell migration through ITGB3 'Tyr-773' phosphorylation. Interacts with SDC3 (via heparan sulfate chains); this interaction mediates the neurite outgrowth-promoting signal from PTN to the cytoskeleton of growing neurites; this interaction mediates osteoblast recruitment. Interacts with GPC2 (via heparan sulfate); this interaction promotes neurite outgrowth through binding of PTN with chondroitin sulfate of proteoglycans, thereby releasing PTPRS of chondroitin sulfate proteoglycans (CSPGs) and leading to binding with heparan sulfate of GPC2. In terms of processing, phosphorylated by NEK6.

The protein localises to the secreted. Functionally, secreted growth factor that mediates its signal through cell-surface proteoglycan and non-proteoglycan receptors. Binds cell-surface proteoglycan receptor via their chondroitin sulfate (CS) groups. Thereby regulates many processes like cell proliferation, cell survival, cell growth, cell differentiation and cell migration in several tissues namely neuron and bone. Also plays a role in synaptic plasticity and learning-related behavior by inhibiting long-term synaptic potentiation. Binds PTPRZ1, leading to neutralization of the negative charges of the CS chains of PTPRZ1, inducing PTPRZ1 clustering, thereby causing the dimerization and inactivation of its phosphatase activity leading to increased tyrosine phosphorylation of each of the PTPRZ1 substrates like ALK, CTNNB1 or AFAP1L2 in order to activate the PI3K-AKT pathway. Through PTPRZ1 binding controls oligodendrocyte precursor cell differentiation by enhancing the phosphorylation of AFAP1L2 in order to activate the PI3K-AKT pathway. Forms a complex with PTPRZ1 and integrin alpha-V/beta-3 (ITGAV:ITGB3) that stimulates endothelial cell migration through SRC dephosphorylation and activation that consequently leads to ITGB3 'Tyr-773' phosphorylation. In adult hippocampus promotes dendritic arborization, spine development, and functional integration and connectivity of newborn granule neurons through ALK by activating AKT signaling pathway. Binds GPC2 and chondroitin sulfate proteoglycans (CSPGs) at the neuron surface, leading to abrogation of binding between PTPRS and CSPGs and neurite outgrowth promotion. Binds SDC3 and mediates bone formation by recruiting and attaching osteoblasts/osteoblast precursors to the sites for new bone deposition. Binds ALK and promotes cell survival and cell proliferation through MAPK pathway activation. Inhibits proliferation and enhances differentiation of neural stem cells by inhibiting FGF2-induced fibroblast growth factor receptor signaling pathway. Mediates regulatory mechanisms in normal hemostasis and in hematopoietic regeneration and in maintaining the balance of myeloid and lymphoid regeneration. In addition may play a role in the female reproductive system, auditory response and the progesterone-induced decidualization pathway. The chain is Pleiotrophin from Sus scrofa (Pig).